We begin with the raw amino-acid sequence, 504 residues long: MSILAGFKNLLKHSKSSKGRSNASKSVDVSVNRDVAAYTELAAKNVNAGGDEEIRVANYPGLEKYQLIENLGDGAFSQVYKAYSIDRKEHVAVKVIRKYEMNKKQRQGVFKEVNIMRRVKHKNVVNLFDFVETEDFYHLVMELAEGGELFHQIVNFTYFSENLARHIIIQVAEAVKHLHDVCGIVHRDIKPENLLFQPIEYLPSQNYTPPSLEPNKLDEGMFLEGIGAGGIGRILIADFGFSKVVWNSKTATPCGTVGYAAPEIVNDELYSKNVDMWAMGCVLHTMLCGFPPFFDENIKDLASKVVNGEFEFLSPWWDDISDSAKDLITHLLTVDPRERYDIHQFFQHPWIKGESKMPENFTYKPKLHGTPGGPKLSLPRSLVSKGEIDIPTTPIKSATHPLLSSYSEPKTPGVSSVHEAMGVAYDIRRLNHLGFSPEQLSKKSMNTGSIKELILDEETTTDDDDYIISSFPLNDTLGSEGKDPFSLNLKESSLYSRRSAKRVN.

Positions Y65–I351 constitute a Protein kinase domain. ATP-binding positions include L71–V79 and K94. The Proton acceptor role is filled by D188. Position 252 is a phosphothreonine (T252).

Belongs to the protein kinase superfamily. CAMK Ser/Thr protein kinase family. CaMK subfamily. As to quaternary structure, interacts with sty1. Mg(2+) is required as a cofactor. In terms of processing, autophosphorylated.

It is found in the cytoplasm. It localises to the barrier septum. The protein localises to the forespore membrane. The protein resides in the ascus epiplasm. It catalyses the reaction L-seryl-[protein] + ATP = O-phospho-L-seryl-[protein] + ADP + H(+). It carries out the reaction L-threonyl-[protein] + ATP = O-phospho-L-threonyl-[protein] + ADP + H(+). Its function is as follows. Has a role in the regulation of G2/M transition during the mitotic cell cycle. This Schizosaccharomyces pombe (strain 972 / ATCC 24843) (Fission yeast) protein is Calcium/calmodulin-dependent protein kinase type II.